The primary structure comprises 508 residues: tRNA(Ile2) 2-agmatinylcytidine synthetase TiaS (508 aa).

A DNA-binding region (OB) is located at residues 367-427 (ITGGHVLIEL…YQLNIEKINV (61 aa)).

This sequence belongs to the TiaS family.

Its subcellular location is the cytoplasm. The catalysed reaction is cytidine(34) in tRNA(Ile2) + agmatine + ATP + H2O = 2-agmatinylcytidine(34) in tRNA(Ile2) + AMP + 2 phosphate + 2 H(+). Functionally, ATP-dependent agmatine transferase that catalyzes the formation of 2-agmatinylcytidine (agm2C) at the wobble position (C34) of tRNA(Ile2), converting the codon specificity from AUG to AUA. The sequence is that of tRNA(Ile2) 2-agmatinylcytidine synthetase TiaS from Methanococcus voltae (strain ATCC BAA-1334 / A3).